The sequence spans 1388 residues: Rho-associated protein kinase 2 (1388 aa).

Positions 1–24 are disordered; that stretch reads MSRPPPTGKMPGAPEAVSGDGAGA. Positions 92–354 constitute a Protein kinase domain; that stretch reads YDVVKVIGRG…VEEIKQHPFF (263 aa). ATP contacts are provided by residues 98–106 and lysine 121; that span reads IGRGAFGEV. The Proton acceptor role is filled by aspartate 214. The AGC-kinase C-terminal domain maps to 357–425; the sequence is DQWNWDNIRE…YRENLLLSDS (69 aa). An interaction with PPP1R12A region spans residues 363–784; it reads NIRETAAPVV…INELLKQKDV (422 aa). The interval 373–420 is interaction with NPM1; it reads PELSSDIDSSNFDDIEDDKGDVETFPIPKAFVGNQLPFIGFTYYRENL. Residue threonine 414 is modified to Phosphothreonine; by ROCK2. An REM-1 domain is found at 497–573; sequence ALRQLEREKA…LDETNALLRT (77 aa). Residues 512 to 530 show a composition bias toward basic and acidic residues; the sequence is NAEYQRKADHEADKKRNLE. The tract at residues 512–532 is disordered; the sequence is NAEYQRKADHEADKKRNLEND. Phosphotyrosine; by SRC is present on tyrosine 722. The region spanning 979-1047 is the RhoBD domain; it reads TSDVANLANE…LAEIMNRKEP (69 aa). The tract at residues 979–1047 is RHOA binding; that stretch reads TSDVANLANE…LAEIMNRKEP (69 aa). The stretch at 1054–1126 forms a coiled coil; that stretch reads TDMRRKEKEN…EQLRSQLQAL (73 aa). Phosphoserine is present on serine 1137. Residues 1150 to 1349 form the PH domain; it reads ESRLEGWLSL…WVSRLVKKIP (200 aa). At threonine 1212 the chain carries Phosphothreonine. The segment at 1260–1315 adopts a Phorbol-ester/DAG-type zinc-finger fold; sequence GHEFIPTLYHFPTNCEACMKPLWHMFKPPPALECRRCHIKCHKDHMDKKEEIIAPC. Residues 1345–1388 are disordered; it reads VKKIPKKPPAPDPFARSSPRTSMKIQQNQSIRRPSRQLAANKPS. Residues serine 1362 and serine 1374 each carry the phosphoserine modification. Residues 1362-1376 are compositionally biased toward polar residues; it reads SPRTSMKIQQNQSIR.

The protein belongs to the protein kinase superfamily. AGC Ser/Thr protein kinase family. Homodimer. Interacts with IRS1. Interacts with RAF1. Interacts with RHOA (activated by GTP), RHOB and RHOC. Interacts with PPP1R12A. Interacts with EP300. Interacts with CHORDC1. Interacts with BRCA2. Interacts with NPM1; this interaction enhances ROCK2 activity. Interacts with SORL1. Interacts with PJVK. Requires Mg(2+) as cofactor. Autophosphorylated. Phosphorylation at Tyr-722 reduces its binding to RHOA and is crucial for focal adhesion dynamics. Dephosphorylation by PTPN11 stimulates its RHOA binding activity. In terms of processing, cleaved by granzyme B during apoptosis. This leads to constitutive activation of the kinase and membrane blebbing.

The protein resides in the cytoplasm. It localises to the cell membrane. It is found in the nucleus. The protein localises to the cytoskeleton. Its subcellular location is the microtubule organizing center. The protein resides in the centrosome. It catalyses the reaction L-seryl-[protein] + ATP = O-phospho-L-seryl-[protein] + ADP + H(+). It carries out the reaction L-threonyl-[protein] + ATP = O-phospho-L-threonyl-[protein] + ADP + H(+). With respect to regulation, activated by RHOA binding. Inhibited by Y-27632. Functionally, protein kinase which is a key regulator of actin cytoskeleton and cell polarity. Involved in regulation of smooth muscle contraction, actin cytoskeleton organization, stress fiber and focal adhesion formation, neurite retraction, cell adhesion and motility via phosphorylation of ADD1, BRCA2, CNN1, EZR, DPYSL2, EP300, MSN, MYL9/MLC2, NPM1, RDX, PPP1R12A and VIM. Phosphorylates SORL1 and IRF4. Acts as a negative regulator of VEGF-induced angiogenic endothelial cell activation. Positively regulates the activation of p42/MAPK1-p44/MAPK3 and of p90RSK/RPS6KA1 during myogenic differentiation. Plays an important role in the timely initiation of centrosome duplication. Inhibits keratinocyte terminal differentiation. May regulate closure of the eyelids and ventral body wall through organization of actomyosin bundles. Plays a critical role in the regulation of spine and synaptic properties in the hippocampus. Plays an important role in generating the circadian rhythm of the aortic myofilament Ca(2+) sensitivity and vascular contractility by modulating the myosin light chain phosphorylation. This chain is Rho-associated protein kinase 2 (ROCK2), found in Sus scrofa (Pig).